The primary structure comprises 244 residues: Sepiapterin reductase (244 aa).

NADP(+)-binding positions include 9 to 15, 40 to 42, 66 to 67, and Asn93; these read GAGKGIG, SRT, and DI. Phe99 is a substrate binding site. An NADP(+)-binding site is contributed by Thr116. Substrate contacts are provided by Ser145 and Tyr158. NADP(+) contacts are provided by residues Tyr158, Lys162, and 191–196; that span reads VYTPMW. Trp196 contributes to the substrate binding site.

The protein belongs to the short-chain dehydrogenases/reductases (SDR) family. As to quaternary structure, homodimer.

The protein localises to the cytoplasm. It catalyses the reaction L-threo-7,8-dihydrobiopterin + NADP(+) = L-sepiapterin + NADPH + H(+). It carries out the reaction L-threo-tetrahydrobiopterin + 2 NADP(+) = 6-pyruvoyl-5,6,7,8-tetrahydropterin + 2 NADPH + 2 H(+). Its activity is regulated as follows. Slightly inhibited by N-acetyldopamine but not by N-acetylserotonin or melatonin. Its function is as follows. Catalyzes the final reductions in tetra-hydrobiopterin biosynthesis to form 5,6,7,8-tetrahydrobiopterin. The polypeptide is Sepiapterin reductase (Chlorobaculum tepidum (strain ATCC 49652 / DSM 12025 / NBRC 103806 / TLS) (Chlorobium tepidum)).